A 396-amino-acid chain; its full sequence is NADH-quinone oxidoreductase subunit D (396 aa).

The protein belongs to the complex I 49 kDa subunit family. As to quaternary structure, NDH-1 is composed of 14 different subunits. Subunits NuoB, C, D, E, F, and G constitute the peripheral sector of the complex.

The protein resides in the cell inner membrane. It catalyses the reaction a quinone + NADH + 5 H(+)(in) = a quinol + NAD(+) + 4 H(+)(out). In terms of biological role, NDH-1 shuttles electrons from NADH, via FMN and iron-sulfur (Fe-S) centers, to quinones in the respiratory chain. The immediate electron acceptor for the enzyme in this species is believed to be ubiquinone. Couples the redox reaction to proton translocation (for every two electrons transferred, four hydrogen ions are translocated across the cytoplasmic membrane), and thus conserves the redox energy in a proton gradient. This Bartonella henselae (strain ATCC 49882 / DSM 28221 / CCUG 30454 / Houston 1) (Rochalimaea henselae) protein is NADH-quinone oxidoreductase subunit D.